Consider the following 165-residue polypeptide: Small ribosomal subunit protein uS5 (165 aa).

In terms of domain architecture, S5 DRBM spans 10 to 73 (LNEKLIAVNR…EKARRNMVTV (64 aa)).

It belongs to the universal ribosomal protein uS5 family. As to quaternary structure, part of the 30S ribosomal subunit. Contacts proteins S4 and S8.

Functionally, with S4 and S12 plays an important role in translational accuracy. In terms of biological role, located at the back of the 30S subunit body where it stabilizes the conformation of the head with respect to the body. The sequence is that of Small ribosomal subunit protein uS5 from Photobacterium profundum (strain SS9).